Reading from the N-terminus, the 767-residue chain is General transcription and DNA repair factor IIH helicase/translocase subunit XPB1 (767 aa).

The segment at 1–51 is disordered; sequence MGNGERGRPNKKMKYGGKDDQKMKNIQNAEDYYDDADEDSRDGEGEEKKRD. Acidic residues predominate over residues 31 to 41; it reads DYYDDADEDSR. Positions 42–51 are enriched in basic and acidic residues; the sequence is DGEGEEKKRD. A Helicase ATP-binding domain is found at 293-455; that stretch reads MFGNGRARSG…DLNFLIGPKL (163 aa). 306-313 contributes to the ATP binding site; the sequence is LPCGAGKS. Positions 408 to 411 match the DEVH box motif; the sequence is DEVH. The 167-residue stretch at 510-676 folds into the Helicase C-terminal domain; that stretch reads RACEFLIRFH…SLPPPDAGSS (167 aa). The segment at 742–767 is disordered; it reads RHKSGQQFKKPKDPTKRHNLFKKRYV. Positions 750–766 match the Nuclear localization signal motif; the sequence is KKPKDPTKRHNLFKKRY. The span at 758–767 shows a compositional bias: basic residues; the sequence is RHNLFKKRYV.

This sequence belongs to the helicase family. RAD25/XPB subfamily. Component of the 7-subunit TFIIH core complex composed of XPB, XPD, TFB1/GTF2H1, GTF2H2/P44, TFB4/GTF2H3, TFB2/GTF2H4 and TFB5/GTF2H5, which is active in NER. The core complex associates with the 3-subunit CDK-activating kinase (CAK) module composed of CYCH1/cyclin H1, CDKD and MAT1/At4g30820 to form the 10-subunit holoenzyme (holo-TFIIH) active in transcription. As to expression, expressed ubiquitously.

It localises to the nucleus. The catalysed reaction is Couples ATP hydrolysis with the unwinding of duplex DNA by translocating in the 3'-5' direction.. The enzyme catalyses ATP + H2O = ADP + phosphate + H(+). Its function is as follows. ATP-dependent 3'-5' DNA helicase/translocase; binds dsDNA rather than ssDNA, unzipping it in a translocase rather than classical helicase activity. Component of the general transcription and DNA repair factor IIH (TFIIH) core complex. When complexed to CDK-activating kinase (CAK), involved in RNA transcription by RNA polymerase II. The ATPase activity of XPB/ERCC3, but not its helicase activity, is required for DNA opening; it may wrap around the damaged DNA wedging it open, causing localized melting and twisting that allows XPD/ERCC2 helicase to anchor. The ATP-dependent helicase activity of XPB/ERCC3 may be required for promoter escape. Also involved in transcription-coupled nucleotide excision repair (NER) of damaged DNA. In NER, TFIIH acts by opening DNA around the lesion to allow the excision of the damaged oligonucleotide and its replacement by a new DNA fragment. The structure of the TFIIH transcription complex differs from the NER-TFIIH complex. Partially complements UV sensitivity of a yeast SSL2 mutation. Required during the early stages of development, including seed germination. The polypeptide is General transcription and DNA repair factor IIH helicase/translocase subunit XPB1 (XPB1) (Arabidopsis thaliana (Mouse-ear cress)).